An 88-amino-acid chain; its full sequence is Small ribosomal subunit protein bS20 (88 aa).

This sequence belongs to the bacterial ribosomal protein bS20 family.

In terms of biological role, binds directly to 16S ribosomal RNA. The chain is Small ribosomal subunit protein bS20 from Methylocella silvestris (strain DSM 15510 / CIP 108128 / LMG 27833 / NCIMB 13906 / BL2).